The sequence spans 338 residues: Fructose-1,6-bisphosphatase class 1 (338 aa).

Residues E90, D112, L114, and D115 each contribute to the Mg(2+) site. Residues 115-118, N207, and K273 contribute to the substrate site; that span reads DGSS. E279 is a binding site for Mg(2+).

It belongs to the FBPase class 1 family. In terms of assembly, homotetramer. Mg(2+) is required as a cofactor.

It localises to the cytoplasm. The catalysed reaction is beta-D-fructose 1,6-bisphosphate + H2O = beta-D-fructose 6-phosphate + phosphate. It participates in carbohydrate biosynthesis; gluconeogenesis. The sequence is that of Fructose-1,6-bisphosphatase class 1 from Xanthomonas campestris pv. campestris (strain 8004).